A 453-amino-acid chain; its full sequence is Probable glycine dehydrogenase (decarboxylating) subunit 1 (453 aa).

This sequence belongs to the GcvP family. N-terminal subunit subfamily. The glycine cleavage system is composed of four proteins: P, T, L and H. In this organism, the P 'protein' is a heterodimer of two subunits.

The enzyme catalyses N(6)-[(R)-lipoyl]-L-lysyl-[glycine-cleavage complex H protein] + glycine + H(+) = N(6)-[(R)-S(8)-aminomethyldihydrolipoyl]-L-lysyl-[glycine-cleavage complex H protein] + CO2. In terms of biological role, the glycine cleavage system catalyzes the degradation of glycine. The P protein binds the alpha-amino group of glycine through its pyridoxal phosphate cofactor; CO(2) is released and the remaining methylamine moiety is then transferred to the lipoamide cofactor of the H protein. In Dictyoglomus turgidum (strain DSM 6724 / Z-1310), this protein is Probable glycine dehydrogenase (decarboxylating) subunit 1.